A 310-amino-acid polypeptide reads, in one-letter code: Malate dehydrogenase (310 aa).

Residues 7-12 (GAGNVG) and aspartate 32 each bind NAD(+). Substrate is bound by residues arginine 81 and arginine 87. NAD(+)-binding positions include asparagine 94 and 117–119 (VSN). Asparagine 119 and arginine 150 together coordinate substrate. The Proton acceptor role is filled by histidine 174.

This sequence belongs to the LDH/MDH superfamily. MDH type 3 family. As to quaternary structure, homotetramer; arranged as a dimer of dimers.

The enzyme catalyses (S)-malate + NAD(+) = oxaloacetate + NADH + H(+). In terms of biological role, catalyzes the reversible oxidation of malate to oxaloacetate. The protein is Malate dehydrogenase of Chlorobaculum parvum (strain DSM 263 / NCIMB 8327) (Chlorobium vibrioforme subsp. thiosulfatophilum).